The primary structure comprises 612 residues: Elongation factor 4 (612 aa).

The 183-residue stretch at 11 to 193 folds into the tr-type G domain; the sequence is NHIRNFSIVA…KIVTDIPAPS (183 aa). GTP contacts are provided by residues 23–28 and 140–143; these read DHGKST and NKID.

It belongs to the TRAFAC class translation factor GTPase superfamily. Classic translation factor GTPase family. LepA subfamily.

It is found in the cell membrane. The catalysed reaction is GTP + H2O = GDP + phosphate + H(+). In terms of biological role, required for accurate and efficient protein synthesis under certain stress conditions. May act as a fidelity factor of the translation reaction, by catalyzing a one-codon backward translocation of tRNAs on improperly translocated ribosomes. Back-translocation proceeds from a post-translocation (POST) complex to a pre-translocation (PRE) complex, thus giving elongation factor G a second chance to translocate the tRNAs correctly. Binds to ribosomes in a GTP-dependent manner. In Lactobacillus acidophilus (strain ATCC 700396 / NCK56 / N2 / NCFM), this protein is Elongation factor 4.